Here is a 157-residue protein sequence, read N- to C-terminus: Large ribosomal subunit protein uL15 (157 aa).

It belongs to the universal ribosomal protein uL15 family. In terms of assembly, part of the 50S ribosomal subunit.

Functionally, binds to the 23S rRNA. The protein is Large ribosomal subunit protein uL15 of Ehrlichia ruminantium (strain Welgevonden).